The chain runs to 266 residues: uncharacterized protein (266 aa).

The first 22 residues, 1 to 22 (MRYLKKLAWFISVIILGIFIIG), serve as a signal peptide directing secretion. The N-palmitoyl cysteine moiety is linked to residue cysteine 23. Residue cysteine 23 is the site of S-diacylglycerol cysteine attachment.

The protein belongs to the staphylococcal tandem lipoprotein family.

It localises to the cell membrane. This is an uncharacterized protein from Staphylococcus aureus (strain USA300).